Reading from the N-terminus, the 433-residue chain is Pyrimidine-nucleoside phosphorylase (433 aa).

Lys-81–Ser-83 contacts phosphate. 2 residues coordinate K(+): Gly-88 and Thr-90. Residues Thr-92, Lys-108–Ser-110, and Thr-120 each bind phosphate. Substrate-binding residues include Arg-168 and Lys-187. Residues Leu-243, Ala-246, and Glu-255 each contribute to the K(+) site.

Belongs to the thymidine/pyrimidine-nucleoside phosphorylase family. In terms of assembly, homodimer. Requires K(+) as cofactor.

It catalyses the reaction uridine + phosphate = alpha-D-ribose 1-phosphate + uracil. The enzyme catalyses thymidine + phosphate = 2-deoxy-alpha-D-ribose 1-phosphate + thymine. The catalysed reaction is 2'-deoxyuridine + phosphate = 2-deoxy-alpha-D-ribose 1-phosphate + uracil. Its function is as follows. Catalyzes phosphorolysis of the pyrimidine nucleosides uridine, thymidine and 2'-deoxyuridine with the formation of the corresponding pyrimidine base and ribose-1-phosphate. The chain is Pyrimidine-nucleoside phosphorylase (pdp) from Staphylococcus aureus (strain NCTC 8325 / PS 47).